The following is a 397-amino-acid chain: 1-deoxy-D-xylulose 5-phosphate reductoisomerase (397 aa).

NADPH contacts are provided by threonine 10, glycine 11, serine 12, isoleucine 13, glycine 36, asparagine 38, and asparagine 124. 1-deoxy-D-xylulose 5-phosphate is bound at residue lysine 125. Residue glutamate 126 coordinates NADPH. Position 150 (aspartate 150) interacts with Mn(2+). Positions 151, 152, 186, and 209 each coordinate 1-deoxy-D-xylulose 5-phosphate. Residue glutamate 152 participates in Mn(2+) binding. Residue glycine 215 participates in NADPH binding. 1-deoxy-D-xylulose 5-phosphate-binding residues include serine 222, asparagine 227, lysine 228, and glutamate 231. Glutamate 231 lines the Mn(2+) pocket.

It belongs to the DXR family. It depends on Mg(2+) as a cofactor. Requires Mn(2+) as cofactor.

The enzyme catalyses 2-C-methyl-D-erythritol 4-phosphate + NADP(+) = 1-deoxy-D-xylulose 5-phosphate + NADPH + H(+). It functions in the pathway isoprenoid biosynthesis; isopentenyl diphosphate biosynthesis via DXP pathway; isopentenyl diphosphate from 1-deoxy-D-xylulose 5-phosphate: step 1/6. Functionally, catalyzes the NADPH-dependent rearrangement and reduction of 1-deoxy-D-xylulose-5-phosphate (DXP) to 2-C-methyl-D-erythritol 4-phosphate (MEP). This Photobacterium profundum (strain SS9) protein is 1-deoxy-D-xylulose 5-phosphate reductoisomerase.